A 146-amino-acid polypeptide reads, in one-letter code: Probable transporter XF_0765 (146 aa).

4 helical membrane passes run 9-29, 46-66, 91-111, and 116-136; these read FTVA…SEMI, NPSL…GMAL, IVFG…CPGP, and LSTG…GMII.

The protein belongs to the TsuA/YedE (TC 9.B.102) family.

Its subcellular location is the cell inner membrane. The sequence is that of Probable transporter XF_0765 from Xylella fastidiosa (strain 9a5c).